A 408-amino-acid polypeptide reads, in one-letter code: Endo-1,4-beta-xylanase A (408 aa).

An N-terminal signal peptide occupies residues 1-19 (MKLSASFAALALLLPFVQA). A CBM1 domain is found at 20-55 (QSPVWGQCGGIGWTGPTTCTAGNVCQEYSAYYSQCI). The interval 64-89 (TSVSTAPNPPPTSHTSTSSAPSGAST) is disordered. Positions 76–89 (SHTSTSSAPSGAST) are enriched in low complexity. Positions 88–405 (STSTAKLNTL…KPAYDGIAIG (318 aa)) constitute a GH10 domain. E222 functions as the Proton donor in the catalytic mechanism. E327 functions as the Nucleophile in the catalytic mechanism. Residues C355 and C361 are joined by a disulfide bond.

This sequence belongs to the glycosyl hydrolase 10 (cellulase F) family.

The protein resides in the secreted. The catalysed reaction is Endohydrolysis of (1-&gt;4)-beta-D-xylosidic linkages in xylans.. Its pathway is glycan degradation; xylan degradation. Functionally, endo-1,4-beta-xylanase involved in the hydrolysis of xylan, a major structural heterogeneous polysaccharide found in plant biomass representing the second most abundant polysaccharide in the biosphere, after cellulose. The polypeptide is Endo-1,4-beta-xylanase A (xynA) (Phanerodontia chrysosporium (White-rot fungus)).